A 498-amino-acid chain; its full sequence is Protein translocase subunit SecY (498 aa).

A run of 10 helical transmembrane segments spans residues 23–43, 65–87, 124–144, 163–183, 191–211, 229–249, 281–301, 322–342, 382–402, and 406–426; these read FVIS…ISVI, FDLF…VGIS, ITRF…IALI, AFYI…GDII, GITL…FIVM, AINF…ISFV, AAGV…ITIA, PVGI…YSYI, FIGA…SLVL, and TTLS…MELY. The span at 478–488 shows a compositional bias: basic and acidic residues; sequence VEPTQDKKKNP. A disordered region spans residues 478-498; the sequence is VEPTQDKKKNPSDPLEVSQLW.

This sequence belongs to the SecY/SEC61-alpha family. In terms of assembly, component of the Sec protein translocase complex. Heterotrimer consisting of SecY, SecE and SecG subunits. The heterotrimers can form oligomers, although 1 heterotrimer is thought to be able to translocate proteins. Interacts with the ribosome. Interacts with SecDF, and other proteins may be involved. Interacts with SecA.

The protein localises to the cell membrane. Functionally, the central subunit of the protein translocation channel SecYEG. Consists of two halves formed by TMs 1-5 and 6-10. These two domains form a lateral gate at the front which open onto the bilayer between TMs 2 and 7, and are clamped together by SecE at the back. The channel is closed by both a pore ring composed of hydrophobic SecY resides and a short helix (helix 2A) on the extracellular side of the membrane which forms a plug. The plug probably moves laterally to allow the channel to open. The ring and the pore may move independently. This is Protein translocase subunit SecY from Mycoplasmoides gallisepticum (strain R(low / passage 15 / clone 2)) (Mycoplasma gallisepticum).